The following is a 276-amino-acid chain: Large ribosomal subunit protein uL2 (276 aa).

The interval 213–264 (WLGRRPHNRGVVMNPVDHPHGGGEGRTSGGRHPVTPWGKPTKGYKTRTNKRT) is disordered.

It belongs to the universal ribosomal protein uL2 family. Part of the 50S ribosomal subunit. Forms a bridge to the 30S subunit in the 70S ribosome.

Its function is as follows. One of the primary rRNA binding proteins. Required for association of the 30S and 50S subunits to form the 70S ribosome, for tRNA binding and peptide bond formation. It has been suggested to have peptidyltransferase activity; this is somewhat controversial. Makes several contacts with the 16S rRNA in the 70S ribosome. In Granulibacter bethesdensis (strain ATCC BAA-1260 / CGDNIH1), this protein is Large ribosomal subunit protein uL2.